The following is a 152-amino-acid chain: Xanthine-guanine phosphoribosyltransferase (152 aa).

5-phospho-alpha-D-ribose 1-diphosphate contacts are provided by residues R37 to G38, R69, and D88 to T96. R69 is a binding site for GMP. D89 is a Mg(2+) binding site. Residues D92 and I135 each contribute to the guanine site. Residues D92 and I135 each coordinate xanthine. Residues D92 to T96 and W134 to I135 each bind GMP.

It belongs to the purine/pyrimidine phosphoribosyltransferase family. XGPT subfamily. As to quaternary structure, homotetramer. It depends on Mg(2+) as a cofactor.

It is found in the cell inner membrane. The catalysed reaction is GMP + diphosphate = guanine + 5-phospho-alpha-D-ribose 1-diphosphate. The enzyme catalyses XMP + diphosphate = xanthine + 5-phospho-alpha-D-ribose 1-diphosphate. It carries out the reaction IMP + diphosphate = hypoxanthine + 5-phospho-alpha-D-ribose 1-diphosphate. Its pathway is purine metabolism; GMP biosynthesis via salvage pathway; GMP from guanine: step 1/1. It functions in the pathway purine metabolism; XMP biosynthesis via salvage pathway; XMP from xanthine: step 1/1. Its function is as follows. Purine salvage pathway enzyme that catalyzes the transfer of the ribosyl-5-phosphate group from 5-phospho-alpha-D-ribose 1-diphosphate (PRPP) to the N9 position of the 6-oxopurines guanine and xanthine to form the corresponding ribonucleotides GMP (guanosine 5'-monophosphate) and XMP (xanthosine 5'-monophosphate), with the release of PPi. To a lesser extent, also acts on hypoxanthine. The sequence is that of Xanthine-guanine phosphoribosyltransferase from Erwinia tasmaniensis (strain DSM 17950 / CFBP 7177 / CIP 109463 / NCPPB 4357 / Et1/99).